The chain runs to 68 residues: Small ribosomal subunit protein bS21 (68 aa).

A disordered region spans residues histidine 35–lysine 68. The span at glutamate 37–alanine 49 shows a compositional bias: basic and acidic residues. Residues alanine 50 to arginine 59 show a composition bias toward basic residues.

This sequence belongs to the bacterial ribosomal protein bS21 family.

This chain is Small ribosomal subunit protein bS21, found in Sphingopyxis alaskensis (strain DSM 13593 / LMG 18877 / RB2256) (Sphingomonas alaskensis).